Reading from the N-terminus, the 327-residue chain is Phenylalanine--tRNA ligase alpha subunit (327 aa).

Glutamate 252 is a Mg(2+) binding site.

Belongs to the class-II aminoacyl-tRNA synthetase family. Phe-tRNA synthetase alpha subunit type 1 subfamily. In terms of assembly, tetramer of two alpha and two beta subunits. It depends on Mg(2+) as a cofactor.

The protein localises to the cytoplasm. It catalyses the reaction tRNA(Phe) + L-phenylalanine + ATP = L-phenylalanyl-tRNA(Phe) + AMP + diphosphate + H(+). The polypeptide is Phenylalanine--tRNA ligase alpha subunit (Shewanella amazonensis (strain ATCC BAA-1098 / SB2B)).